Here is a 494-residue protein sequence, read N- to C-terminus: Probable cytosol aminopeptidase (494 aa).

2 residues coordinate Mn(2+): lysine 260 and aspartate 265. Lysine 272 is a catalytic residue. Positions 283, 342, and 344 each coordinate Mn(2+). Arginine 346 is an active-site residue.

Belongs to the peptidase M17 family. It depends on Mn(2+) as a cofactor.

It is found in the cytoplasm. The catalysed reaction is Release of an N-terminal amino acid, Xaa-|-Yaa-, in which Xaa is preferably Leu, but may be other amino acids including Pro although not Arg or Lys, and Yaa may be Pro. Amino acid amides and methyl esters are also readily hydrolyzed, but rates on arylamides are exceedingly low.. It catalyses the reaction Release of an N-terminal amino acid, preferentially leucine, but not glutamic or aspartic acids.. Functionally, presumably involved in the processing and regular turnover of intracellular proteins. Catalyzes the removal of unsubstituted N-terminal amino acids from various peptides. The polypeptide is Probable cytosol aminopeptidase (Bacillus cereus (strain B4264)).